The primary structure comprises 247 residues: Neurotrophic factor BDNF precursor form (247 aa).

An N-terminal signal peptide occupies residues 1–18; sequence MTILFLTMVISYFGCMKA. Residues 19-128 constitute a propeptide that is removed on maturation; the sequence is APMKEANIRG…AANMSMRVRR (110 aa). A glycan (N-linked (GlcNAc...) asparagine) is linked at N121. 3 disulfides stabilise this stretch: C141-C208, C186-C237, and C196-C239.

Belongs to the NGF-beta family. In terms of assembly, monomers and homodimers. Binds to NTRK2/TRKB. Can form heterodimers with other neurotrophin family members, such as NTF3 and NTF4 (in vitro), but the physiological relevance of this is not clear. BDNF precursor form: interacts with the heterodimer formed by NGFR and SORCS2. In terms of processing, N-glycosylated and glycosulfated, contrary to mature BDNF. Post-translationally, mature BDNF is produced by proteolytic removal of the propeptide, catalyzed by a FURIN family member. In addition, the precursor form is proteolytically cleaved within the propeptide, but this is not an obligatory intermediate for the production of mature BDNF. Can be converted into mature BDNF by plasmin (PLG). As to expression, detected in blood plasma and in saliva (at protein level). Brain. Highly expressed in hippocampus, amygdala, cerebral cortex and cerebellum. Also expressed in heart, lung, skeletal muscle, testis, prostate and placenta.

The protein localises to the secreted. In terms of biological role, important signaling molecule that activates signaling cascades downstream of NTRK2. During development, promotes the survival and differentiation of selected neuronal populations of the peripheral and central nervous systems. Participates in axonal growth, pathfinding and in the modulation of dendritic growth and morphology. Major regulator of synaptic transmission and plasticity at adult synapses in many regions of the CNS. The versatility of BDNF is emphasized by its contribution to a range of adaptive neuronal responses including long-term potentiation (LTP), long-term depression (LTD), certain forms of short-term synaptic plasticity, as well as homeostatic regulation of intrinsic neuronal excitability. Functionally, important signaling molecule that activates signaling cascades downstream of NTRK2. Activates signaling cascades via the heterodimeric receptor formed by NGFR and SORCS2. Signaling via NGFR and SORCS2 plays a role in synaptic plasticity and long-term depression (LTD). Binding to NGFR and SORCS2 promotes neuronal apoptosis. Promotes neuronal growth cone collapse. The polypeptide is Neurotrophic factor BDNF precursor form (Homo sapiens (Human)).